The following is a 198-amino-acid chain: MATNVTVHNATCFSQALTEDFWDGVKLSFTVSIVIGLVIGGIIWTLVTCLSRRRASASISPRMPKSSSRRPRSSSHNHALNRSGFYRNSSCERRSNLSLASLTFQRQTSQEQTDPFTRKPSFRASTFHPFMQCPPLAVEADSQLVTLPRSNNTSPTANNTVNLSRPDFHWSNNSLRLGPSTQTPPPAYDSIIKAFPDS.

A Bipartite nuclear localization signal motif is present at residues 52 to 72; that stretch reads RRRASASISPRMPKSSSRRPR. 2 disordered regions span residues 58–83 and 172–198; these read SISPRMPKSSSRRPRSSSHNHALNRS and NNSLRLGPSTQTPPPAYDSIIKAFPDS. A compositionally biased stretch (polar residues) spans 172-181; it reads NNSLRLGPST.

It belongs to the MYCT1 family.

Its subcellular location is the nucleus. In terms of biological role, may regulate certain MYC target genes, MYC seems to be a direct upstream transcriptional activator. The sequence is that of Myc target protein 1 homolog (myct1) from Xenopus tropicalis (Western clawed frog).